Consider the following 890-residue polypeptide: Alanine--tRNA ligase (890 aa).

The Zn(2+) site is built by histidine 568, histidine 572, cysteine 680, and histidine 684.

The protein belongs to the class-II aminoacyl-tRNA synthetase family. Requires Zn(2+) as cofactor.

It is found in the cytoplasm. It carries out the reaction tRNA(Ala) + L-alanine + ATP = L-alanyl-tRNA(Ala) + AMP + diphosphate. Its function is as follows. Catalyzes the attachment of alanine to tRNA(Ala) in a two-step reaction: alanine is first activated by ATP to form Ala-AMP and then transferred to the acceptor end of tRNA(Ala). Also edits incorrectly charged Ser-tRNA(Ala) and Gly-tRNA(Ala) via its editing domain. The polypeptide is Alanine--tRNA ligase (Psychrobacter arcticus (strain DSM 17307 / VKM B-2377 / 273-4)).